The primary structure comprises 211 residues: MPKKPIIIGVTGGSGGGKTSVSRAILSNFPDEKIAMIEHDSYYKDQSHLTFEERVSTNYDHPFAFDTDLMIEHINELIAGRPVDIPIYDYTQHTRSNKTYRQEPQDVFIVEGILVLEDKRLRDLMDIKLFVDTDDDIRIIRRIKRDMEERGRSLDSIIDQYNSVVKPMYHQFIEPTKRYADVVIPEGVSNTVAIDLINTKVASILEESKKA.

Position 12–19 (12–19 (GGSGGGKT)) interacts with ATP.

It belongs to the uridine kinase family.

It is found in the cytoplasm. The enzyme catalyses uridine + ATP = UMP + ADP + H(+). It catalyses the reaction cytidine + ATP = CMP + ADP + H(+). It functions in the pathway pyrimidine metabolism; CTP biosynthesis via salvage pathway; CTP from cytidine: step 1/3. The protein operates within pyrimidine metabolism; UMP biosynthesis via salvage pathway; UMP from uridine: step 1/1. This Streptococcus thermophilus (strain CNRZ 1066) protein is Uridine kinase.